The primary structure comprises 456 residues: MGSSEGQETHVLMVTLPFQGHINPMLKLAKHLSLSSKNLHINLATIESARDLLSTVEKPRYPVDLVFFSDGLPKEDPKAPETLLKSLNKVGAMNLSKIIEEKRYSCIISSPFTPWVPAVAASHNISCAILWIQACGAYSVYYRYYMKTNSFPDLEDLNQTVELPALPLLEVRDLPSFMLPSGGAHFYNLMAEFADCLRYVKWVLVNSFYELESEIIESMADLKPVIPIGPLVSPFLLGDGEEETLDGKNLDFCKSDDCCMEWLDKQARSSVVYISFGSMLETLENQVETIAKALKNRGLPFLWVIRPKEKAQNVAVLQEMVKEGQGVVLEWSPQEKILSHEAISCFVTHCGWNSTMETVVAGVPVVAYPSWTDQPIDARLLVDVFGIGVRMRNDSVDGELKVEEVERCIEAVTEGPAAVDIRRRAAELKRVARLALAPGGSSTRNLDLFISDITIA.

Residues Ser-278, 332 to 334, 349 to 357, and 371 to 374 contribute to the UDP-alpha-D-glucose site; these read SPQ, HCGWNSTME, and WTDQ.

The protein belongs to the UDP-glycosyltransferase family.

Functionally, possesses low quercetin 7-O-glucosyltransferase activity in vitro. In Arabidopsis thaliana (Mouse-ear cress), this protein is UDP-glycosyltransferase 84B1 (UGT84B1).